The sequence spans 122 residues: Large ribosomal subunit protein uL14 (122 aa).

This sequence belongs to the universal ribosomal protein uL14 family. As to quaternary structure, part of the 50S ribosomal subunit. Forms a cluster with proteins L3 and L19. In the 70S ribosome, L14 and L19 interact and together make contacts with the 16S rRNA in bridges B5 and B8.

In terms of biological role, binds to 23S rRNA. Forms part of two intersubunit bridges in the 70S ribosome. This Halorhodospira halophila (strain DSM 244 / SL1) (Ectothiorhodospira halophila (strain DSM 244 / SL1)) protein is Large ribosomal subunit protein uL14.